Here is a 210-residue protein sequence, read N- to C-terminus: Putative Dihydrofolate reductase (210 aa).

Residues 4-184 form the DHFR domain; it reads TLYCVVAVDT…IFYMFETYIK (181 aa).

The protein belongs to the dihydrofolate reductase family.

The catalysed reaction is (6S)-5,6,7,8-tetrahydrofolate + NADP(+) = 7,8-dihydrofolate + NADPH + H(+). The sequence is that of Putative Dihydrofolate reductase (ORF2) from Human herpesvirus 8 type P (isolate GK18) (HHV-8).